The sequence spans 193 residues: MGISQQAASQHLRELEDEGLITRNAEGKGISVMVTDKGRHELLRVYNILHDSLHSRPDHVEITGTLVSGMNEGAYYMSREGYTGQFQERLGYVPFPGTLNVDTDRKHGPEIARLDGMNGTIIDGFTDGKRSYGWVKCFAGTLNGTIPCHLIRLERTHHGSSTVELISKLDIRKETGLDDGGKITIRIPLEQED.

The H-T-H motif-like stretch occupies residues Met-1–His-59. Positions Val-60–Asp-193 are riboflavin kinase. Gly-69–Ala-74 is a binding site for CDP. Mg(2+) contacts are provided by Thr-98 and Asn-100. 2 residues coordinate FMN: Thr-156 and Glu-164. A CDP-binding site is contributed by Leu-169–Arg-172.

Belongs to the archaeal riboflavin kinase family. It depends on Mg(2+) as a cofactor.

It catalyses the reaction riboflavin + CTP = CDP + FMN + H(+). It functions in the pathway cofactor biosynthesis; FMN biosynthesis; FMN from riboflavin (CTP route): step 1/1. Functionally, catalyzes the CTP-dependent phosphorylation of riboflavin (vitamin B2) to form flavin mononucleotide (FMN). The chain is Riboflavin kinase (ribK) from Cenarchaeum symbiosum (strain A).